Here is an 871-residue protein sequence, read N- to C-terminus: Zinc finger and BTB domain-containing protein 10 (871 aa).

2 disordered regions span residues 1-156 (MSFS…FNGR) and 177-228 (GASL…AGEG). The span at 14–26 (RGGGLVTASGGGS) shows a compositional bias: gly residues. Residues 27–37 (TNNNAGGEASA) show a composition bias toward low complexity. A compositionally biased stretch (pro residues) spans 39-56 (PPQPQPRQPPPPAPPALQ). Over residues 65–76 (EEVELEGLEPQD) the composition is skewed to acidic residues. The span at 77-103 (LEASAGPAAGAAEEAKELLLPQDAGGP) shows a compositional bias: low complexity. Arg-126 bears the Omega-N-methylarginine mark. The segment covering 126–135 (RGGGGGGLGN) has biased composition (gly residues). Position 210 is a phosphoserine (Ser-210). A Glycyl lysine isopeptide (Lys-Gly) (interchain with G-Cter in SUMO2) cross-link involves residue Lys-245. Residues 364-433 (CDVSIVVSGK…LYSGNLVLTS (70 aa)) form the BTB domain. Glycyl lysine isopeptide (Lys-Gly) (interchain with G-Cter in SUMO2) cross-links involve residues Lys-468, Lys-483, and Lys-497. A Phosphoserine modification is found at Ser-565. Glycyl lysine isopeptide (Lys-Gly) (interchain with G-Cter in SUMO2) cross-links involve residues Lys-573, Lys-672, Lys-684, Lys-696, and Lys-706. C2H2-type zinc fingers lie at residues 722–744 (LKCPHCSYVAKYRRTLKRHLLIH) and 750–772 (FSCDICGKLFTRREHVKRHSLVH). The tract at residues 812-871 (SQPGGQEGVDQGQDTEFPRDEEYEENEVGEADEELVDDGEDQNDPSRWDESGEVCMSLDD) is disordered. The segment covering 830 to 854 (RDEEYEENEVGEADEELVDDGEDQN) has biased composition (acidic residues).

The protein localises to the nucleus. Functionally, may be involved in transcriptional regulation. This chain is Zinc finger and BTB domain-containing protein 10 (ZBTB10), found in Homo sapiens (Human).